The sequence spans 258 residues: Regulatory protein RecX (258 aa).

It belongs to the RecX family.

The protein localises to the cytoplasm. Modulates RecA activity. This is Regulatory protein RecX from Streptococcus pneumoniae (strain Hungary19A-6).